Here is a 247-residue protein sequence, read N- to C-terminus: Adenosine 5'-phosphosulfate reductase (247 aa).

Residues Cys-133, Cys-134, Cys-216, and Cys-219 each contribute to the [4Fe-4S] cluster site. The disordered stretch occupies residues 222-247; sequence KPAPGSDPRSGRWAGQAKTECGLHAS. The active-site Nucleophile; cysteine thiosulfonate intermediate is Cys-242.

It belongs to the PAPS reductase family. CysH subfamily. [4Fe-4S] cluster is required as a cofactor.

It localises to the cytoplasm. The enzyme catalyses [thioredoxin]-disulfide + sulfite + AMP + 2 H(+) = adenosine 5'-phosphosulfate + [thioredoxin]-dithiol. It functions in the pathway sulfur metabolism; hydrogen sulfide biosynthesis; sulfite from sulfate. In terms of biological role, catalyzes the formation of sulfite from adenosine 5'-phosphosulfate (APS) using thioredoxin as an electron donor. This chain is Adenosine 5'-phosphosulfate reductase, found in Rhodococcus opacus (strain B4).